The following is an 83-amino-acid chain: NAD(P)H-quinone oxidoreductase subunit L, organellar chromatophore (83 aa).

2 consecutive transmembrane segments (helical) span residues 17-37 (LLLA…LALY) and 53-73 (LFVY…SPFL).

This sequence belongs to the complex I NdhL subunit family. NDH-1 can be composed of about 15 different subunits; different subcomplexes with different compositions have been identified which probably have different functions.

It is found in the plastid. Its subcellular location is the organellar chromatophore thylakoid membrane. The catalysed reaction is a plastoquinone + NADH + (n+1) H(+)(in) = a plastoquinol + NAD(+) + n H(+)(out). The enzyme catalyses a plastoquinone + NADPH + (n+1) H(+)(in) = a plastoquinol + NADP(+) + n H(+)(out). In terms of biological role, NDH-1 shuttles electrons from an unknown electron donor, via FMN and iron-sulfur (Fe-S) centers, to quinones in the respiratory and/or the photosynthetic chain. The immediate electron acceptor for the enzyme in this species is believed to be plastoquinone. Couples the redox reaction to proton translocation, and thus conserves the redox energy in a proton gradient. The sequence is that of NAD(P)H-quinone oxidoreductase subunit L, organellar chromatophore from Paulinella chromatophora.